We begin with the raw amino-acid sequence, 124 residues long: Small ribosomal subunit protein uS12 (124 aa).

Aspartate 89 is subject to 3-methylthioaspartic acid.

It belongs to the universal ribosomal protein uS12 family. Part of the 30S ribosomal subunit. Contacts proteins S8 and S17. May interact with IF1 in the 30S initiation complex.

Functionally, with S4 and S5 plays an important role in translational accuracy. In terms of biological role, interacts with and stabilizes bases of the 16S rRNA that are involved in tRNA selection in the A site and with the mRNA backbone. Located at the interface of the 30S and 50S subunits, it traverses the body of the 30S subunit contacting proteins on the other side and probably holding the rRNA structure together. The combined cluster of proteins S8, S12 and S17 appears to hold together the shoulder and platform of the 30S subunit. This Serratia proteamaculans (strain 568) protein is Small ribosomal subunit protein uS12.